A 613-amino-acid polypeptide reads, in one-letter code: Secretogranin-2 (613 aa).

The first 27 residues, 1–27 (MAEAKTHWLGAVLSLIPLIFLLSEAEA), serve as a signal peptide directing secretion. Residues 28-30 (ASF) constitute a propeptide that is removed on maturation. Disordered regions lie at residues 67–105 (QQAHKEESSPDYNPYQGVSVPLQQKENGDLPESSRDSLS) and 119–146 (QAENEPQSAPKENKPYTLNSEKNFPMDM). The span at 92 to 105 (ENGDLPESSRDSLS) shows a compositional bias: basic and acidic residues. At Tyr-150 the chain carries Sulfotyrosine. Ser-173, Ser-267, Ser-428, Ser-528, Ser-551, and Ser-552 each carry phosphoserine. A compositionally biased stretch (basic and acidic residues) spans 257 to 283 (ESQTQEEVRDSKENADKTEQINDEMKR). The segment at 257–287 (ESQTQEEVRDSKENADKTEQINDEMKRSGQL) is disordered. A compositionally biased stretch (basic and acidic residues) spans 546–557 (HLSQHSSQETDK). The tract at residues 546–580 (HLSQHSSQETDKLASVSKRLPVGTPKSDDTPNRPY) is disordered.

Belongs to the chromogranin/secretogranin protein family. As to quaternary structure, interacts with Secretogranin III/SCG3. Highest levels detected in anterior pituitary followed by adrenal medulla and posterior pituitary (at protein level). In the brain, high levels are found in the hypothalamus, comparable to those present in posterior pituitary with two- to six-fold lower levels present in the other brain regions investigated including caudate nucleus, hippocampus, thalamus and brainstem (at protein level).

Its subcellular location is the secreted. In terms of biological role, neuroendocrine protein of the granin family that regulates the biogenesis of secretory granules. The sequence is that of Secretogranin-2 (SCG2) from Bos taurus (Bovine).